The primary structure comprises 938 residues: MMLDIKKTRGFHKIPQASKLQSTTKTSSVVATSASSQNEVPSPGGSAGSKVGATNPVRAANQRFFLVSSYKDPTFLKAECDLAHAHVTTSKVKTTLQPHRRSRAGEDSRNNNYNTSRAPTLINMRRPSLFNGNQQPTTTNSTTINNTTSRNTTSNTSNGVLKYSVRSTTATATSTSTRNYGKLKPLNNNQTTAGVAMMNGHTNNNNNNTRNSSNINNGGNNNMQRQQQQHDDISFIDSDDPPATGGPEAGISTTKTSICYFKPITPPLQLRHEQNQVQQQEEQPQPSSSKSASHRYPRPKSTIIASAHSNFAASFEKFSGGLYRQTNGETNIESKTSSNARRYGIDSLSIKASIEKFNNLSGQKRQNPGSGSGIGPGSATASGLGGGRLSVASRSNHGSQAGGSSSNLQQRYSSDLDNIRVAAGYSSSLTRAAYRTTATMNSVSTPVAVTSELGGPISGDGGETATAMGQPTSKVTVRGAHSNRQPIECDSVVLTNKASKDATTAATPTVATATATHTPATSSVSTVTVTAAAPNSASDSTLARSGTGSSSTARSVLPPMTPTSSRYWDRDSGTSRSSIGTSSALNSSSLKHNSDDGYKTASSSRDEKSEGLCGLRNIGNTCFMNSVIQCLSHTQELTRFLRSHHGSRSLSTKDQQILHEFAKLIQEMWTANVHTVTPMELKRAFSTKHRMYSDYNQQDAQEFLRFFLDSLHSALNSGVKGETLNIDDNLSDNKKADLTWEWYTRHENSLVRDLFVGQLKSTLKCTTCGNTSVTFDPFWDLSVPLPSSSRCKLEACLDLFIREEVLDGDEMPTCAKCKTRRKCTKSFTIQRFPKYLVIHLKRFSETRWSKLSNIVEFPTSDSELNMGSYGANSNSNVHYSLYAISNHMGSTAGGHYVALCKHPVSRKWHEFNDNIVSDALSENHLVSSSAYILFYERT.

Disordered stretches follow at residues 1–53 (MMLD…KVGA), 91–117 (KVKT…NTSR), 130–254 (FNGN…ISTT), 273–297 (EQNQ…HRYP), 360–410 (LSGQ…NLQQ), and 500–610 (KDAT…EKSE). The span at 22–36 (STTKTSSVVATSASS) shows a compositional bias: low complexity. Low complexity-rich tracts occupy residues 137-158 (TTTN…NTSN), 167-177 (STTATATSTST), 198-227 (MNGH…QRQQ), and 275-289 (NQVQ…PSSS). Positions 392–410 (ASRSNHGSQAGGSSSNLQQ) are enriched in polar residues. Low complexity-rich tracts occupy residues 502 to 555 (ATTA…TARS) and 574 to 583 (TSRSSIGTSS). Positions 592–610 (HNSDDGYKTASSSRDEKSE) are enriched in basic and acidic residues. The USP domain occupies 613–938 (CGLRNIGNTC…SAYILFYERT (326 aa)). Catalysis depends on C622, which acts as the Nucleophile. Zn(2+) is bound by residues C765, C768, C814, and C817. H895 functions as the Proton acceptor in the catalytic mechanism.

It belongs to the peptidase C19 family. In terms of assembly, interacts (via N-terminus) with imd (via N-terminus). Interacts with Rpt6.

It carries out the reaction Thiol-dependent hydrolysis of ester, thioester, amide, peptide and isopeptide bonds formed by the C-terminal Gly of ubiquitin (a 76-residue protein attached to proteins as an intracellular targeting signal).. Hydrolase that deubiquitinates polyubiquitinated target proteins. Required for preventing the activation of the Toll signaling cascades under unchallenged conditions. Essential for bodily calcium homeostasis. Functionally, required for preventing the activation of the immune deficiency (Imd) signaling cascade under unchallenged conditions. Regulates the Imd pathway by specifically removing 'Lys-48'-linked ubiquitin from imd. Also promotes imd degradation probably by binding to imd and enhancing its association with the proteasome. This Drosophila melanogaster (Fruit fly) protein is Ubiquitin carboxyl-terminal hydrolase Usp2.